Reading from the N-terminus, the 147-residue chain is uncharacterized protein (147 aa).

It to B.subtilis XkdM.

This is an uncharacterized protein from Bacillus subtilis (strain 168).